The chain runs to 1549 residues: Ferredoxin-dependent glutamate synthase (1549 aa).

Catalysis depends on Cys37, which acts as the For GATase activity. Residues 37–435 (CGVGFIAHLD…PGEMIVLDLQ (399 aa)) form the Glutamine amidotransferase type-2 domain. Residue 1116–1173 (LHEVHCLLVENNLREKVILRVDGGLRTGQDVVMAALLGADEYGFGTIAMIAGGCIMAR) participates in FMN binding. Positions 1169, 1175, and 1180 each coordinate [3Fe-4S] cluster.

It belongs to the glutamate synthase family. Monomer. The cofactor is [3Fe-4S] cluster. FAD is required as a cofactor. FMN serves as cofactor.

Its subcellular location is the plastid. The protein localises to the chloroplast stroma. The catalysed reaction is 2 oxidized [2Fe-2S]-[ferredoxin] + 2 L-glutamate = L-glutamine + 2 reduced [2Fe-2S]-[ferredoxin] + 2-oxoglutarate + 2 H(+). It participates in amino-acid biosynthesis; L-glutamate biosynthesis via GLT pathway; L-glutamate from 2-oxoglutarate and L-glutamine (ferredoxin route): step 1/1. Its pathway is energy metabolism; nitrogen metabolism. The polypeptide is Ferredoxin-dependent glutamate synthase (gltB) (Cyanidium caldarium (Red alga)).